The chain runs to 356 residues: Heat-inducible transcription repressor HrcA (356 aa).

This sequence belongs to the HrcA family.

In terms of biological role, negative regulator of class I heat shock genes (grpE-dnaK-dnaJ and groELS operons). Prevents heat-shock induction of these operons. This chain is Heat-inducible transcription repressor HrcA, found in Bartonella quintana (strain Toulouse) (Rochalimaea quintana).